A 260-amino-acid polypeptide reads, in one-letter code: (+)-borneol dehydrogenase 1 (260 aa).

NAD(+) is bound by residues 20–26, aspartate 44, 67–68, and 94–96; these read GGASGIG, DV, and NAG. Residue serine 148 is the Proton donor of the active site. NAD(+) is bound by residues tyrosine 161, lysine 165, and threonine 196. The active-site Proton acceptor is the tyrosine 161. Lysine 165 (proton donor/acceptor) is an active-site residue.

This sequence belongs to the short-chain dehydrogenases/reductases (SDR) family.

The enzyme catalyses (1R,2S,4R)-borneol + NAD(+) = (1R,4R)-camphor + NADH + H(+). Functionally, involved in the biosynthesis of monoterpene natural products related to camphor. Catalayzes the oxidation of (+)-borneol to (+)-camphor. Shows absolute selectivity towards (+)-borneol. Catalyzes the oxidation of (+)-isoborneol to (-)-camphor. Shows absolute selectivity towards (+)-isoborneol. The chain is (+)-borneol dehydrogenase 1 from Salvia officinalis (Sage).